The primary structure comprises 303 residues: MTYSPGNPGYPQAQPAGSYGGVTPSFAHADEGASKLPMYLNIAVAVLGLAAYFASFGPMFTLSTELGGGDGAVSGDTGLPVGVALLAALLAGVALVPKAKSHVTVVAVLGVLGVFLMVSATFNKPSAYSTGWALWVVLAFIVFQAVAAVLALLVETGAITAPAPRPKFDPYGQYGRYGQYGQYGVQPGGYYGQQGAQQAAGLQSPGPQQSPQPPGYGSQYGGYSSSPSQSGSGYTAQPPAQPPAQSGSQQSHQGPSTPPTGFPSFSPPPPVSAGTGSQAGSAPVNYSNPSGGEQSSSPGGAPV.

Helical transmembrane passes span 42–62, 77–97, 102–122, and 134–154; these read IAVA…MFTL, TGLP…ALVP, HVTV…SATF, and LWVV…ALLV. Composition is skewed to low complexity over residues 194–207 and 215–255; these read QGAQ…SPGP and GYGS…HQGP. The tract at residues 194-303 is disordered; sequence QGAQQAAGLQ…QSSSPGGAPV (110 aa). Pro residues predominate over residues 256 to 271; that stretch reads STPPTGFPSFSPPPPV. Residues 274-286 show a composition bias toward polar residues; that stretch reads GTGSQAGSAPVNY. Positions 287-303 are enriched in low complexity; sequence SNPSGGEQSSSPGGAPV.

It to M.paratuberculosis 34 kDa antigenic protein.

The protein resides in the cell membrane. This chain is 34 kDa antigenic protein homolog, found in Mycobacterium bovis (strain ATCC BAA-935 / AF2122/97).